We begin with the raw amino-acid sequence, 252 residues long: Ribonuclease HII (252 aa).

In terms of domain architecture, RNase H type-2 spans 68–252; it reads EYVAGLDEVG…FGPVRDRLRS (185 aa). 3 residues coordinate a divalent metal cation: Asp74, Glu75, and Asp165.

This sequence belongs to the RNase HII family. Requires Mn(2+) as cofactor. The cofactor is Mg(2+).

It localises to the cytoplasm. It catalyses the reaction Endonucleolytic cleavage to 5'-phosphomonoester.. Its function is as follows. Endonuclease that specifically degrades the RNA of RNA-DNA hybrids. The chain is Ribonuclease HII from Lacticaseibacillus paracasei (strain ATCC 334 / BCRC 17002 / CCUG 31169 / CIP 107868 / KCTC 3260 / NRRL B-441) (Lactobacillus paracasei).